A 1052-amino-acid chain; its full sequence is SWI/SNF-related matrix-associated actin-dependent regulator of chromatin subfamily A member 5 (1052 aa).

A compositionally biased stretch (pro residues) spans 1 to 15 (MSSAAEPPPPPPPES). The tract at residues 1 to 83 (MSSAAEPPPP…QEPDPTYEEK (83 aa)) is disordered. At Ser2 the chain carries N-acetylserine. The segment covering 16–55 (APSKPAASIASGGSNSSNKGGPEGVAAQAVASAASAGPAD) has biased composition (low complexity). Ser66 carries the post-translational modification Phosphoserine. Residues 69–83 (KQKEIQEPDPTYEEK) are compositionally biased toward basic and acidic residues. Residue Lys83 forms a Glycyl lysine isopeptide (Lys-Gly) (interchain with G-Cter in SUMO2) linkage. Thr113 carries the phosphothreonine modification. A phosphoserine mark is found at Ser116, Ser137, and Ser171. The Helicase ATP-binding domain maps to 192–357 (ISLYENGING…WSLLNFLLPD (166 aa)). An ATP-binding site is contributed by 205-212 (DEMGLGKT). The DEAH box signature appears at 308–311 (DEAH). The residue at position 440 (Lys440) is an N6-acetyllysine. One can recognise a Helicase C-terminal domain in the interval 487–638 (VLDKLLPKLK…SIVIQQGRLV (152 aa)). Residues Lys644, Lys647, Lys694, Lys722, and Lys735 each participate in a glycyl lysine isopeptide (Lys-Gly) (interchain with G-Cter in SUMO2) cross-link. A phosphoserine mark is found at Ser755 and Ser825. 2 consecutive SANT domains span residues 840–892 (QGFT…ERCN) and 943–1007 (KGKN…LITL). Lys966 is covalently cross-linked (Glycyl lysine isopeptide (Lys-Gly) (interchain with G-Cter in SUMO2)). Positions 1015-1052 (LEEKEKAEKKKRGPKPSTQKRKMDGAPDGRGRKKKLKL) are disordered. The segment covering 1023–1034 (KKKRGPKPSTQK) has biased composition (basic residues). The span at 1035–1044 (RKMDGAPDGR) shows a compositional bias: basic and acidic residues.

It belongs to the SNF2/RAD54 helicase family. ISWI subfamily. In terms of assembly, component of the ACF-5 ISWI chromatin-remodeling complex (also called the ACF/WCRF complex) at least composed of SMARCA5/SNF2H and BAZ1A/ACF1, which regulates the spacing of histone octamers on the DNA template to facilitate access to DNA. Within the complex interacts with BAZ1A/ACF1; the interaction is direct and is required to slide nucleosomes from end to center positions on a DNA template in an ATP-dependent manner. Component of the CHRAC ISWI chromatin-remodeling complex at least composed of SMARCA5/SNF2H, BAZ1A/ACF1, CHRAC1 and POLE3; the complex preferentially binds DNA through the CHRAC1-POLE3 heterodimer and possesses ATP-dependent nucleosome-remodeling activity. Within the complex interacts with BAZ1A/ACF1; the interaction is direct and promotes the interaction with the POLE3-CHRAC1 heterodimer. Within the complex interacts with the POLE3-CHRAC1 heterodimer; the interaction is direct and enhances nucleosome sliding activity by the SMARCA5/SNF2H and BAZ1A/ACF1 interaction. Neither POLE3 nor CHRAC1 enhances nucleosome sliding activity of the ACF-5 ISWI chromatin remodeling complex. Component of the WICH-5 ISWI chromatin-remodeling complex (also called the WICH complex) at least composed of SMARCA5/SNF2H and BAZ1B/WSTF, which regulates the spacing of histone octamers on the DNA template to facilitate access to DNA. Within the complex interacts with BAZ1B/WSTF. Component of the NoRC-5 ISWI chromatin-remodeling complex (also called the NoRC chromatin-remodeling complex) at least composed of SMARCA5/SNF2H and BAZ2A/TIP5; the complex suppresses rDNA transcription by a combination of nucleosome remodeling, histone deacetylation, and DNA methylation. Within the complex interacts with BAZ2A/TIP5. Within the complex interacts with HDAC1. Component of the BRF-5 ISWI chromatin-remodeling complex at least composed of SMARCA5/SNF2H and BAZ2B. Within the complex interacts with BAZ2B. Component of the NURF-5 ISWI chromatin-remodeling complex at least composed of SMARCA5/SNF2H and BPTF. Within the complex interacts with BPFT. Component of the CERF-5 ISWI chromatin-remodeling complex at least composed of SMARCA5/SNF2H and CECR2. LUZP1 is detected as part of the CERF-5 complex in embryonic stem cells where it is involved in complex stabilization but is not detected in the complex in the testis. Within the complex interacts with CECR2. Component of the RSF-5 ISWI chromatin-remodeling complex (also called the RSF complex) at least composed of SMARCA5/SNF2H and RSF1. Within the complex interacts with RSF1. Interacts with the cohesin complex component RAD21; the interaction is direct. Interacts with the NuRD complex components HDAC2, RBBP4 and CHD4; the interactions are direct. Interacts with PCNA. Component of the B-WICH complex, at least composed of SMARCA5/SNF2H, BAZ1B/WSTF, SF3B1, DEK, MYO1C, ERCC6, MYBBP1A and DDX21 which positively regulates RNA polymerase III transcription. Interacts with MYO1C. Interacts with BEND3. Interacts with SIRT6; promoting recruitment to DNA damage sites. (Microbial infection) Interacts with JC virus small t antigen. As to quaternary structure, (Microbial infection) Interacts with Epstein Barr virus (EBV) lytic switch protein BZLF1; this interaction participates to the activation of early lytic viral genes by BZLF1. As to expression, ubiquitously expressed.

The protein localises to the nucleus. Its subcellular location is the chromosome. It catalyses the reaction ATP + H2O = ADP + phosphate + H(+). In terms of biological role, ATPase that possesses intrinsic ATP-dependent nucleosome-remodeling activity. Catalytic subunit of ISWI chromatin-remodeling complexes, which form ordered nucleosome arrays on chromatin and facilitate access to DNA during DNA-templated processes such as DNA replication, transcription, and repair; this may require intact histone H4 tails. Within the ISWI chromatin-remodeling complexes, slides edge- and center-positioned histone octamers away from their original location on the DNA template. Catalytic activity and histone octamer sliding propensity is regulated and determined by components of the ISWI chromatin-remodeling complexes. The BAZ1A/ACF1-, BAZ1B/WSTF-, BAZ2A/TIP5- and BAZ2B-containing ISWI chromatin-remodeling complexes regulate the spacing of nucleosomes along the chromatin and have the ability to slide mononucleosomes to the center of a DNA template in an ATP-dependent manner. The CECR2- and RSF1-containing ISWI chromatin-remodeling complexes do not have the ability to slide mononucleosomes to the center of a DNA template. Binds to core histones together with RSF1, and is required for the assembly of regular nucleosome arrays by the RSF-5 ISWI chromatin-remodeling complex. Involved in DNA replication and together with BAZ1A/ACF1 is required for replication of pericentric heterochromatin in S-phase. Probably plays a role in repression of RNA polymerase I dependent transcription of the rDNA locus, through the recruitment of the SIN3/HDAC1 corepressor complex to the rDNA promoter. Essential component of the WICH-5 ISWI chromatin-remodeling complex (also called the WICH complex), a chromatin-remodeling complex that mobilizes nucleosomes and reconfigures irregular chromatin to a regular nucleosomal array structure. The WICH-5 ISWI chromatin-remodeling complex regulates the transcription of various genes, has a role in RNA polymerase I transcription. Within the B-WICH complex has a role in RNA polymerase III transcription. Mediates the histone H2AX phosphorylation at 'Tyr-142', and is involved in the maintenance of chromatin structures during DNA replication processes. Essential component of NoRC-5 ISWI chromatin-remodeling complex, a complex that mediates silencing of a fraction of rDNA by recruiting histone-modifying enzymes and DNA methyltransferases, leading to heterochromatin formation and transcriptional silencing. This is SWI/SNF-related matrix-associated actin-dependent regulator of chromatin subfamily A member 5 from Homo sapiens (Human).